Here is a 282-residue protein sequence, read N- to C-terminus: Trihydroxynaphthalene reductase PfmaI (282 aa).

Residues isoleucine 41, asparagine 114, and arginine 147 each contribute to the NADP(+) site. Active-site proton donor residues include serine 164 and tyrosine 178. NADP(+) is bound by residues tyrosine 178, lysine 182, isoleucine 211, and threonine 213. Lysine 182 serves as the catalytic Lowers pKa of active site Tyr.

Belongs to the short-chain dehydrogenases/reductases (SDR) family.

It functions in the pathway pigment biosynthesis; melanin biosynthesis. Trihydroxynaphthalene reductase involved the biosynthesis of dihydroxynaphthalene (DHN)-melanin, a bluish-green pigment forming a dark layer in the conidial wall that protects the conidia from UV radiations. The first step of the pathway is the production of the pentaketide 1,3,6,8-tetrahydroxynaphthalene (1,3,6,8-THN or T4HN) by the polyketide synthase PfmaE though condensation of acetyl-CoA with malonyl-CoA. T4HN is not stable and easily oxidizes into the stable form flaviolin. T4HN is also substrate of the hydroxynaphthalene reductase PfmaG to yield scytalone. The scytalone dehydratase PfmaJ then reduces scytalone to 1,3,8-THN. 1,3,8-THN is then substrate of the hydroxynaphthalene reductase PfmaI to yield vermelone. Vermelone is further converted by the multicopper oxidase PfmaD to 1,8-DHN. Finally the laccase PFICI_06862 transforms 1,8-DHN to DHN-melanin. The roles of the 5-oxoprolinase PfmaA and the proline iminopeptidase PfmaB within the cluster have not been elucidated yet. In Pestalotiopsis fici (strain W106-1 / CGMCC3.15140), this protein is Trihydroxynaphthalene reductase PfmaI.